The sequence spans 414 residues: Chromobox protein homolog 6 (414 aa).

The Chromo domain occupies 11-69; it reads FAAESIIKRRIRKGRIEYLVKWKGWAIKYSTWEPEENILDSRLIAAFEQKERERELYGP. Phosphoserine is present on serine 107. 3 disordered regions span residues 127–152, 267–308, and 344–365; these read HRMS…PISP, APFD…VPNW, and ALEP…PEMS. Low complexity predominate over residues 267–287; sequence APFDAHSSSSSGCPSPTLQSS.

In terms of assembly, component of a PRC1-like complex. Distinct PRC1-like core complexes are composed of a RING1 subunit (RING1B or RING1A), one of the six PCGF proteins (PCGF1-6), one PHC protein (PHC1-3) and one of the CBX proteins (CBX2, CBX4, CBX6, CBX7 or CBX8). Interacts with PCGF1, PCGF2, PCGF3, BMI1, PCGF5, PCGF6, RING1 and RNF2. May interact with H3C15 and H3C1. Interacts (via chromodomain) with single-stranded RNA (ssRNA). Post-translationally, ubiquitinated. Ubiquitination regulates the function of the Polycomb group (PcG) multiprotein PRC1-like complex. Deubiquitinated by USP26. Expressed in mouse embryonic stem cells.

It localises to the nucleus. The protein localises to the chromosome. In terms of biological role, component of a Polycomb group (PcG) multiprotein PRC1-like complex, a complex class required to maintain the transcriptionally repressive state of many genes, including Hox genes, throughout development. PcG PRC1 complex acts via chromatin remodeling and modification of histones; it mediates monoubiquitination of histone H2A 'Lys-119', rendering chromatin heritably changed in its expressibility. Possibly contributes to the target selectivity of the PRC1 complex by binding specific regions of chromatin. Recruitment to chromatin might occur in an H3K27me3-independent fashion. May have a PRC1-independent function in embryonic stem cells. The sequence is that of Chromobox protein homolog 6 (Cbx6) from Mus musculus (Mouse).